We begin with the raw amino-acid sequence, 275 residues long: NADH-quinone oxidoreductase subunit E 1 (275 aa).

[2Fe-2S] cluster-binding residues include C99, C104, C140, and C144. The segment at 200–275 (LQAPEPVEEK…DKSKPAKKPR (76 aa)) is disordered. Residues 206–221 (VEEKKSVRASKAKDEQ) are compositionally biased toward basic and acidic residues. A compositionally biased stretch (polar residues) spans 231-242 (AKPSTATDVTNP). Low complexity predominate over residues 243–256 (TLKTPATARKAAAK). The segment covering 258-269 (VKIEGETVDKSK) has biased composition (basic and acidic residues).

It belongs to the complex I 24 kDa subunit family. [2Fe-2S] cluster serves as cofactor.

It carries out the reaction a quinone + NADH + 5 H(+)(in) = a quinol + NAD(+) + 4 H(+)(out). Its function is as follows. NDH-1 shuttles electrons from NADH, via FMN and iron-sulfur (Fe-S) centers, to quinones in the respiratory chain. The immediate electron acceptor for the enzyme in this species is believed to be ubiquinone. Couples the redox reaction to proton translocation (for every two electrons transferred, four hydrogen ions are translocated across the cytoplasmic membrane), and thus conserves the redox energy in a proton gradient. The protein is NADH-quinone oxidoreductase subunit E 1 (nuoE1) of Rhizobium meliloti (strain 1021) (Ensifer meliloti).